A 155-amino-acid chain; its full sequence is Transcriptional regulator MraZ (155 aa).

2 consecutive SpoVT-AbrB domains span residues 5 to 52 and 81 to 124; these read TYEN…SQDR and SMNL…EPAA.

The protein belongs to the MraZ family. As to quaternary structure, forms oligomers.

It is found in the cytoplasm. The protein resides in the nucleoid. The protein is Transcriptional regulator MraZ of Pelagibacter ubique (strain HTCC1062).